The primary structure comprises 1099 residues: Protein transport protein Sec24A (1099 aa).

Disordered stretches follow at residues 1–36 (MSQP…GPVQ), 65–139 (KTLN…LPGA), and 279–317 (SQPT…AGLP). 5 stretches are compositionally biased toward polar residues: residues 10–20 (GGSSTGLQAQN), 68–90 (NPVS…NYQG), 108–126 (SLHS…QNPA), 279–292 (SQPT…SRSV), and 303–317 (YQNT…AGLP). Zn(2+) contacts are provided by cysteine 437, cysteine 440, cysteine 458, and cysteine 461. Residues 437 to 461 (CRSCRTYINPFVSFLDQRRWKCNLC) are zinc finger-like. A Gelsolin-like repeat occupies 972-1044 (PQPPILQLSV…TPESARTIAF (73 aa)).

Belongs to the SEC23/SEC24 family. SEC24 subfamily. In terms of assembly, COPII is composed of at least five proteins: the Sec23/24 complex, the Sec13/31 complex and Sar1. Interacts with TMED2. Interacts (as part of the Sec23/24 complex) with SEC22B; recruits SEC22B into COPII-coated vesicles for its transport from the endoplasmic reticulum to the Golgi. Interacts with STING1; promoting STING1 translocation to COPII vesicles in a STEEP1-dependent manner. Interacts with TMEM39A. Interacts with SACM1L; this interaction is reduced in the absence of TMEM39A. Interacts with kinase FAM20C; transport of FAM20C from the endoplasmic reticulum to the Golgi is likely to be mediated by COPII vesicles.

Its subcellular location is the cytoplasmic vesicle. The protein resides in the COPII-coated vesicle membrane. It is found in the endoplasmic reticulum membrane. The protein localises to the cytoplasm. It localises to the cytosol. Functionally, component of the coat protein complex II (COPII) which promotes the formation of transport vesicles from the endoplasmic reticulum (ER). The coat has two main functions, the physical deformation of the endoplasmic reticulum membrane into vesicles and the selection of cargo molecules for their transport to the Golgi complex. Plays a central role in cargo selection within the COPII complex and together with SEC24B may have a different specificity compared to SEC24C and SEC24D. May package preferentially cargos with cytoplasmic DxE or LxxLE motifs and may also recognize conformational epitopes. The sequence is that of Protein transport protein Sec24A from Bos taurus (Bovine).